Here is a 173-residue protein sequence, read N- to C-terminus: Shikimate kinase 1 (173 aa).

ATP is bound at residue 14 to 19 (GAGKST). Serine 18 serves as a coordination point for Mg(2+). Residues aspartate 36, arginine 60, and glycine 82 each contribute to the substrate site. Arginine 120 is an ATP binding site. Residue arginine 140 coordinates substrate. Glutamine 157 is a binding site for ATP.

This sequence belongs to the shikimate kinase family. Monomer. Requires Mg(2+) as cofactor.

It is found in the cytoplasm. It catalyses the reaction shikimate + ATP = 3-phosphoshikimate + ADP + H(+). Its pathway is metabolic intermediate biosynthesis; chorismate biosynthesis; chorismate from D-erythrose 4-phosphate and phosphoenolpyruvate: step 5/7. In terms of biological role, catalyzes the specific phosphorylation of the 3-hydroxyl group of shikimic acid using ATP as a cosubstrate. In Enterobacter sp. (strain 638), this protein is Shikimate kinase 1.